The sequence spans 491 residues: Ketol-acid reductoisomerase (NADP(+)) (491 aa).

In terms of domain architecture, KARI N-terminal Rossmann spans alanine 15–serine 208. NADP(+) contacts are provided by residues cysteine 45–glutamine 48, arginine 68, arginine 76, serine 78, and aspartate 108–glutamine 110. Histidine 132 is a catalytic residue. Glycine 158 provides a ligand contact to NADP(+). KARI C-terminal knotted domains lie at serine 209–glutamine 344 and tyrosine 345–methionine 484. Residues aspartate 217, glutamate 221, glutamate 389, and glutamate 393 each coordinate Mg(2+). Serine 414 contacts substrate.

It belongs to the ketol-acid reductoisomerase family. It depends on Mg(2+) as a cofactor.

It carries out the reaction (2R)-2,3-dihydroxy-3-methylbutanoate + NADP(+) = (2S)-2-acetolactate + NADPH + H(+). The enzyme catalyses (2R,3R)-2,3-dihydroxy-3-methylpentanoate + NADP(+) = (S)-2-ethyl-2-hydroxy-3-oxobutanoate + NADPH + H(+). Its pathway is amino-acid biosynthesis; L-isoleucine biosynthesis; L-isoleucine from 2-oxobutanoate: step 2/4. It participates in amino-acid biosynthesis; L-valine biosynthesis; L-valine from pyruvate: step 2/4. Its function is as follows. Involved in the biosynthesis of branched-chain amino acids (BCAA). Catalyzes an alkyl-migration followed by a ketol-acid reduction of (S)-2-acetolactate (S2AL) to yield (R)-2,3-dihydroxy-isovalerate. In the isomerase reaction, S2AL is rearranged via a Mg-dependent methyl migration to produce 3-hydroxy-3-methyl-2-ketobutyrate (HMKB). In the reductase reaction, this 2-ketoacid undergoes a metal-dependent reduction by NADPH to yield (R)-2,3-dihydroxy-isovalerate. This is Ketol-acid reductoisomerase (NADP(+)) from Escherichia coli (strain UTI89 / UPEC).